We begin with the raw amino-acid sequence, 656 residues long: Receptor-type tyrosine-protein phosphatase R (656 aa).

An N-terminal signal peptide occupies residues 1–23 (MRRAVGFPALCLLLNLHAAGCFS). Ser-23 is a glycosylation site (O-linked (Xyl...) (chondroitin sulfate) serine). The Extracellular segment spans residues 24–226 (RNNDHFLAIR…EADKIWSKEG (203 aa)). Asn-128 carries N-linked (GlcNAc...) asparagine glycosylation. Residues 227–247 (FYAVVIFLSIFIIIVTCLMII) form a helical membrane-spanning segment. At 248-656 (YRLKERLQLS…ESRLSPETVE (409 aa)) the chain is on the cytoplasmic side. The disordered stretch occupies residues 269–289 (HLSPIARQQAQSEAKTTHSMV). The residue at position 271 (Ser-271) is a Phosphoserine. The span at 274-289 (ARQQAQSEAKTTHSMV) shows a compositional bias: polar residues. Ser-338 carries the phosphoserine; by PKA modification. In terms of domain architecture, Tyrosine-protein phosphatase spans 392–646 (LQSEFMEIPM…EFVHHALCLF (255 aa)). Substrate-binding positions include Asp-553, 587-593 (CSAGIGR), and Gln-631. Cys-587 acts as the Phosphocysteine intermediate in catalysis.

The protein belongs to the protein-tyrosine phosphatase family. Receptor class 7 subfamily. In terms of assembly, interacts with MAPKs. As to expression, expressed in the heart, brain, spleen, lung, liver, skeletal muscle, kidney and testis. Isoform alpha is expressed throughout the granular layer of the cerebellar but not within the Purkinje cells, also in the villi of the ileum and jejunum and both the villi and crypts of the duodenum. Isoform beta is expressed only in the Purkinje cells. Isoform gamma is expressed throughout the brain, the villi and crypts of the duodenum, jejunum and ileum and expressed at low levels in the proximal colon.

The protein resides in the cell membrane. It localises to the cytoplasm. The enzyme catalyses O-phospho-L-tyrosyl-[protein] + H2O = L-tyrosyl-[protein] + phosphate. Sequesters mitogen-activated protein kinases (MAPKs) such as MAPK1, MAPK3 and MAPK14 in the cytoplasm in an inactive form. The MAPKs bind to a dephosphorylated kinase interacting motif, phosphorylation of which by the protein kinase A complex releases the MAPKs for activation and translocation into the nucleus. Isoform gamma may have a role in patterning and cellular proliferation of skeletal elements in the precartilaginous/cartilaginous skeleton. This chain is Receptor-type tyrosine-protein phosphatase R (Ptprr), found in Mus musculus (Mouse).